The sequence spans 524 residues: Bifunctional purine biosynthesis protein PurH (524 aa).

Residues 1 to 145 (MIQQALLSVS…KNHRDVTVIV (145 aa)) enclose the MGS-like domain.

It belongs to the PurH family.

It carries out the reaction (6R)-10-formyltetrahydrofolate + 5-amino-1-(5-phospho-beta-D-ribosyl)imidazole-4-carboxamide = 5-formamido-1-(5-phospho-D-ribosyl)imidazole-4-carboxamide + (6S)-5,6,7,8-tetrahydrofolate. The catalysed reaction is IMP + H2O = 5-formamido-1-(5-phospho-D-ribosyl)imidazole-4-carboxamide. It participates in purine metabolism; IMP biosynthesis via de novo pathway; 5-formamido-1-(5-phospho-D-ribosyl)imidazole-4-carboxamide from 5-amino-1-(5-phospho-D-ribosyl)imidazole-4-carboxamide (10-formyl THF route): step 1/1. It functions in the pathway purine metabolism; IMP biosynthesis via de novo pathway; IMP from 5-formamido-1-(5-phospho-D-ribosyl)imidazole-4-carboxamide: step 1/1. In Ralstonia pickettii (strain 12J), this protein is Bifunctional purine biosynthesis protein PurH.